The primary structure comprises 123 residues: Ribonuclease P protein component (123 aa).

The protein belongs to the RnpA family. As to quaternary structure, consists of a catalytic RNA component (M1 or rnpB) and a protein subunit.

It catalyses the reaction Endonucleolytic cleavage of RNA, removing 5'-extranucleotides from tRNA precursor.. Functionally, RNaseP catalyzes the removal of the 5'-leader sequence from pre-tRNA to produce the mature 5'-terminus. It can also cleave other RNA substrates such as 4.5S RNA. The protein component plays an auxiliary but essential role in vivo by binding to the 5'-leader sequence and broadening the substrate specificity of the ribozyme. In Streptomyces avermitilis (strain ATCC 31267 / DSM 46492 / JCM 5070 / NBRC 14893 / NCIMB 12804 / NRRL 8165 / MA-4680), this protein is Ribonuclease P protein component.